The sequence spans 197 residues: Protein SPMIP2 (197 aa).

A disordered region spans residues 161 to 197; that stretch reads SKAALPIGSRPPKLPKLPKKEEKSKFRPLHQHDARCY. Basic and acidic residues predominate over residues 178-197; sequence PKKEEKSKFRPLHQHDARCY.

The protein is Protein SPMIP2 (SPMIP2) of Bos taurus (Bovine).